The primary structure comprises 1243 residues: Protein MMS22-like (1243 aa).

The protein belongs to the MMS22 family. MMS22L subfamily. As to quaternary structure, component of the MMS22L-TONSL complex.

It localises to the nucleus. It is found in the chromosome. In terms of biological role, component of the MMS22L-TONSL complex, a complex that promotes homologous recombination-mediated repair of double-strand breaks (DSBs) at stalled or collapsed replication forks. The MMS22L-TONSL complex is required to maintain genome integrity during DNA replication. It mediates the assembly of RAD51 filaments on single-stranded DNA (ssDNA): the MMS22L-TONSL complex is recruited to DSBs following histone replacement by histone chaperones and eviction of the replication protein A complex (RPA/RP-A) from DSBs. Following recruitment to DSBs, the TONSL-MMS22L complex promotes recruitment of RAD51 filaments and subsequent homologous recombination. Within the complex, MMS22L acts by binding ssDNA. This is Protein MMS22-like (MMS22L) from Gallus gallus (Chicken).